Consider the following 125-residue polypeptide: MSTIQQLVRKRRKKIKKKKKLAALDSCPQKKCICLKVHTITPKKPNSALRKVTRVKIISISKMFTTAYIPGIGHNLQEHSMVLIRGGRVKDLPGVKYKVIRGCLDAAGVKNRKNGRSKYGVKRPK.

This sequence belongs to the universal ribosomal protein uS12 family. In terms of assembly, part of the 30S ribosomal subunit.

The protein resides in the plastid. In terms of biological role, with S4 and S5 plays an important role in translational accuracy. Located at the interface of the 30S and 50S subunits. The sequence is that of Small ribosomal subunit protein uS12c (rps12) from Euglena longa (Euglenophycean alga).